A 202-amino-acid polypeptide reads, in one-letter code: NADH-quinone oxidoreductase subunit B (202 aa).

Cys81, Cys82, Cys146, and Cys176 together coordinate [4Fe-4S] cluster.

It belongs to the complex I 20 kDa subunit family. In terms of assembly, NDH-1 is composed of 14 different subunits. Subunits NuoB, C, D, E, F, and G constitute the peripheral sector of the complex. Requires [4Fe-4S] cluster as cofactor.

Its subcellular location is the cell inner membrane. It carries out the reaction a quinone + NADH + 5 H(+)(in) = a quinol + NAD(+) + 4 H(+)(out). NDH-1 shuttles electrons from NADH, via FMN and iron-sulfur (Fe-S) centers, to quinones in the respiratory chain. The immediate electron acceptor for the enzyme in this species is believed to be ubiquinone. Couples the redox reaction to proton translocation (for every two electrons transferred, four hydrogen ions are translocated across the cytoplasmic membrane), and thus conserves the redox energy in a proton gradient. The polypeptide is NADH-quinone oxidoreductase subunit B (Bradyrhizobium diazoefficiens (strain JCM 10833 / BCRC 13528 / IAM 13628 / NBRC 14792 / USDA 110)).